The following is a 101-amino-acid chain: Secreted RxLR effector protein 64 (101 aa).

An N-terminal signal peptide occupies residues 1–23 (MMSPPMTTTLMFILNYAIISFHG). The short motif at 48–51 (RELR) is the RxLR element. Residues 67-87 (LQPILPLPLCLPFPLVPASIF) form a helical membrane-spanning segment.

This sequence belongs to the RxLR effector family.

The protein localises to the secreted. Its subcellular location is the host cytoplasm. The protein resides in the host nucleus. It is found in the membrane. Effector that acts as a broad suppressor of cell death to interrupt plant immunity. Inhibits cell death induced by cell death-inducing proteins, including the PAMP elicitor INF1 from P.infestans. This chain is Secreted RxLR effector protein 64, found in Plasmopara viticola (Downy mildew of grapevine).